A 508-amino-acid polypeptide reads, in one-letter code: RanBP-type and C3HC4-type zinc finger-containing protein 1 (508 aa).

The residue at position 1 (Met1) is an N-acetylmethionine. The interval 1–218 is interaction with IRF3; it reads MDEKTKKAEE…PGCEMCCRAR (218 aa). The interaction with TAB2 stretch occupies residues 1–268; that stretch reads MDEKTKKAEE…NYLQHVQLEQ (268 aa). The residue at position 50 (Ser50) is a Phosphoserine. The Ubiquitin-like domain occupies 55-119; it reads IRLCVSVEDA…DQETLHSHGI (65 aa). Residues 69-131 form an interaction with RNF31 region; that stretch reads VTIWLTVRPD…NGDGAYLYLL (63 aa). Residues 163–191 are disordered; that stretch reads QSRGPLEPVLPKPRTNQEPGQPDAAPESP. The RanBP2-type zinc finger occupies 188–220; that stretch reads PESPPVGWQCPGCTFINKPTRPGCEMCCRARPE. Positions 231-259 form a coiled coil; sequence DEEERARLAGEEEALRQYQQRKQQQQEGN. A TRIAD supradomain region spans residues 276–504; sequence EPTECPVCYS…VNGIPCHPSC (229 aa). Residues Cys280, Cys283, Cys298, His300, Cys303, Cys306, and Cys321 each coordinate Zn(2+). The RING-type 1 zinc finger occupies 280-330; it reads CPVCYSVLAPGEAVVLRECLHTFCRECLQGTIRNSQEAEVACPFIDSTYSC. Tyr328 carries the phosphotyrosine modification. Zn(2+)-binding residues include Cys330, Cys369, Cys374, Cys389, Cys392, Cys397, Cys400, His404, Cys409, Cys445, and Cys448. The segment at 349–409 adopts an IBR-type zinc-finger fold; sequence QRFLDLGVSI…CKAIHEHMNC (61 aa). Residues 445–474 form an RING-type 2; atypical zinc finger; it reads CPQCRIVVQKKDGCDWIRCTVCHTEICWVT. Residue Cys458 is part of the active site. Residues Cys463 and Cys466 each coordinate Zn(2+).

Belongs to the RBR family. Component of the LUBAC complex (linear ubiquitin chain assembly complex) which consists of SHARPIN, RBCK1 and RNF31. LUBAC has a MW of approximately 600 kDa suggesting a heteromultimeric assembly of its subunits. Interacts with beta-I-type (PRKCB1) and zeta-type protein kinase C (PRKCZ). Interacts with UBE2L3. Interacts with IREB2 only in iron-rich conditions. Associates with the TNF-R1 signaling complex (TNF-RSC) in a stimulation-dependent manner. Interacts with EYA1, TAB2, TAB3, MAP3K7 TRAF6 and RIPK1. Interacts with IRF3. In terms of processing, auto-ubiquitinated. Auto-ubiquitination leads to degradation by the proteasome. Phosphorylated. In vitro, phosphorylation inhibits auto-ubiquitination activity.

It carries out the reaction [E2 ubiquitin-conjugating enzyme]-S-ubiquitinyl-L-cysteine + [acceptor protein]-L-lysine = [E2 ubiquitin-conjugating enzyme]-L-cysteine + [acceptor protein]-N(6)-ubiquitinyl-L-lysine.. The protein operates within protein modification; protein ubiquitination. Functionally, E3 ubiquitin-protein ligase, which accepts ubiquitin from specific E2 ubiquitin-conjugating enzymes, such as UBE2L3/UBCM4, and then transfers it to substrates. Functions as an E3 ligase for oxidized IREB2 and both heme and oxygen are necessary for IREB2 ubiquitination. Promotes ubiquitination of TAB2 and IRF3 and their degradation by the proteasome. Component of the LUBAC complex which conjugates linear ('Met-1'-linked) polyubiquitin chains to substrates and plays a key role in NF-kappa-B activation and regulation of inflammation. LUBAC conjugates linear polyubiquitin to IKBKG and RIPK1 and is involved in activation of the canonical NF-kappa-B and the JNK signaling pathways. Linear ubiquitination mediated by the LUBAC complex interferes with TNF-induced cell death and thereby prevents inflammation. LUBAC is recruited to the TNF-R1 signaling complex (TNF-RSC) following polyubiquitination of TNF-RSC components by BIRC2 and/or BIRC3 and to conjugate linear polyubiquitin to IKBKG and possibly other components contributing to the stability of the complex. The LUBAC complex is also involved in innate immunity by conjugating linear polyubiquitin chains at the surface of bacteria invading the cytosol to form the ubiquitin coat surrounding bacteria. LUBAC is not able to initiate formation of the bacterial ubiquitin coat, and can only promote formation of linear polyubiquitins on pre-existing ubiquitin. The bacterial ubiquitin coat acts as an 'eat-me' signal for xenophagy and promotes NF-kappa-B activation. Together with OTULIN, the LUBAC complex regulates the canonical Wnt signaling during angiogenesis. Binds polyubiquitin of different linkage types. This chain is RanBP-type and C3HC4-type zinc finger-containing protein 1 (Rbck1), found in Mus musculus (Mouse).